Here is a 599-residue protein sequence, read N- to C-terminus: Cytadherence high molecular weight protein 3 (599 aa).

The segment covering 220–236 (VQVDSGSQNHSFNNSPS) has biased composition (polar residues). A disordered region spans residues 220 to 241 (VQVDSGSQNHSFNNSPSLKPPL).

The protein localises to the cell projection. It localises to the attachment organelle membrane. Its function is as follows. Component of the cytoskeleton-like structure which stabilizes the shape of the wall-less mycoplasma. This cytoskeleton-like network of accessory proteins containing HMW proteins 1 to 5 allows the proper anchoring of cytadhesin proteins in the mycoplasmal membrane at the attachment organelle. Essential for successful surface parasitism. The sequence is that of Cytadherence high molecular weight protein 3 (hmw3) from Mycoplasma genitalium (strain ATCC 33530 / DSM 19775 / NCTC 10195 / G37) (Mycoplasmoides genitalium).